Reading from the N-terminus, the 377-residue chain is Glutamate 5-kinase (377 aa).

Lysine 22 serves as a coordination point for ATP. Substrate-binding residues include serine 62, aspartate 149, and asparagine 161. ATP-binding positions include 181–182 (TD) and 223–229 (TGGMVTK). The 75-residue stretch at 285-359 (QGTLVADSGA…GRNTAQLKRF (75 aa)) folds into the PUA domain.

It belongs to the glutamate 5-kinase family.

It localises to the cytoplasm. The enzyme catalyses L-glutamate + ATP = L-glutamyl 5-phosphate + ADP. Its pathway is amino-acid biosynthesis; L-proline biosynthesis; L-glutamate 5-semialdehyde from L-glutamate: step 1/2. Functionally, catalyzes the transfer of a phosphate group to glutamate to form L-glutamate 5-phosphate. This chain is Glutamate 5-kinase, found in Bifidobacterium adolescentis (strain ATCC 15703 / DSM 20083 / NCTC 11814 / E194a).